The following is a 198-amino-acid chain: Probable molybdenum cofactor guanylyltransferase (198 aa).

GTP contacts are provided by residues 9 to 11, K22, D66, and D95; that span reads LAG. D95 serves as a coordination point for Mg(2+).

The protein belongs to the MobA family. Mg(2+) is required as a cofactor.

It localises to the cytoplasm. It carries out the reaction Mo-molybdopterin + GTP + H(+) = Mo-molybdopterin guanine dinucleotide + diphosphate. Its function is as follows. Transfers a GMP moiety from GTP to Mo-molybdopterin (Mo-MPT) cofactor (Moco or molybdenum cofactor) to form Mo-molybdopterin guanine dinucleotide (Mo-MGD) cofactor. The polypeptide is Probable molybdenum cofactor guanylyltransferase (Clostridium perfringens (strain SM101 / Type A)).